A 634-amino-acid chain; its full sequence is ATP-dependent zinc metalloprotease FtsH (634 aa).

Residues 1 to 5 lie on the Cytoplasmic side of the membrane; sequence MNALK. Residues 6 to 26 form a helical membrane-spanning segment; that stretch reads NFFIWAIIIGAAIVAFNLFEG. Topologically, residues 27 to 100 are periplasmic; that stretch reads KREFTTKVSL…VANPEPPGGW (74 aa). The chain crosses the membrane as a helical span at residues 101-121; that stretch reads LVNVFLSWLPILFFIGIWIFL. Residues 122–634 lie on the Cytoplasmic side of the membrane; that stretch reads LRQMSGGGNV…KSEEVKEEVV (513 aa). 195–202 contributes to the ATP binding site; that stretch reads GEPGVGKT. His-418 contacts Zn(2+). Glu-419 is a catalytic residue. His-422 and Asp-496 together coordinate Zn(2+). Residues 615-634 form a disordered region; it reads DRKSEENKELKSEEVKEEVV.

In the central section; belongs to the AAA ATPase family. The protein in the C-terminal section; belongs to the peptidase M41 family. In terms of assembly, the isolated protease domain (residues 405-634) forms a stable hexamer. Zn(2+) is required as a cofactor.

It is found in the cell inner membrane. Its function is as follows. Acts as a processive, ATP-dependent zinc metallopeptidase for both cytoplasmic and membrane proteins. Plays a role in the quality control of integral membrane proteins. The protein is ATP-dependent zinc metalloprotease FtsH of Aquifex aeolicus (strain VF5).